A 501-amino-acid polypeptide reads, in one-letter code: AKT kinase-transforming protein (501 aa).

Residues 26-129 (AIVKEGWLHK…WATAIQTVAD (104 aa)) form the PH domain. The tract at residues 135–158 (EEETMDFRSGSPSDNSGAEEMEVS) is disordered. The Protein kinase domain occupies 171 to 429 (FEYLKLLGKG…AKEIMQHRFF (259 aa)). ATP contacts are provided by residues 177–185 (LGKGTFGKV) and Lys-200. Asp-295 acts as the Proton acceptor in catalysis. At Tyr-347 the chain carries Phosphotyrosine. The AGC-kinase C-terminal domain occupies 430–501 (ANIVWQDVYE…QFSYSASGTA (72 aa)). A disordered region spans residues 471–501 (TPPDQDDSMECVDSERRPHFPQFSYSASGTA).

This sequence belongs to the protein kinase superfamily. AGC Ser/Thr protein kinase family. RAC subfamily. Interacts with mouse THEM4. Post-translationally, autophosphorylated on threonine and serine residues.

It carries out the reaction L-seryl-[protein] + ATP = O-phospho-L-seryl-[protein] + ADP + H(+). The enzyme catalyses L-threonyl-[protein] + ATP = O-phospho-L-threonyl-[protein] + ADP + H(+). In Mus musculus (Mouse), this protein is AKT kinase-transforming protein (V-AKT).